The following is a 244-amino-acid chain: Protein FAM168A (244 aa).

Methionine 1 bears the N-acetylmethionine mark. The residue at position 102 (arginine 102) is an Asymmetric dimethylarginine. A disordered region spans residues 107-126 (TPYKVPPTQSNTAPPPYSPS).

The protein belongs to the FAM168 family. As to quaternary structure, interacts with POLB. Interacts with AKT1 and MT1X. May interact with FAM168B.

Its function is as follows. In cancer context, protects cells from induced-DNA damage and apoptosis. Acts, at least in part, through PI3K/AKT/NFKB signaling pathway and by preventing POLB degradation. Decreases POLB ubiquitation and stabilizes its protein levels. The polypeptide is Protein FAM168A (Fam168a) (Mus musculus (Mouse)).